A 424-amino-acid chain; its full sequence is MQGARAPRDQGRSPGRMSALGRSSVILLTYVLAATELTCLFMQFSIVPYLSRKLGLDSIAFGYLQTTFGVLQLLGGPVFGRFADQRGARAALTLSFLAALALYLLLAAASSPALPGVYLLFASRLPGALMHTLPAAQMVITDLSAPEERPAALGRLGLCFGVGVILGSLLGGTLVSAYGIQCPAILAALATLLGAVLSFTCIPASTKGAKTDAQAPLPGGPRASVFDLKAIASLLRLPDVPRIFLVKVASNCPTGLFMVMFSIISMDFFQLEAAQAGYLMSFFGLLQMVTQGLVIGQLSSHFSEEVLLRASVLVFIVVGLAMAWMSSVFHFCLLVPGLVFSLCTLNVVTDSMLIKAVSTSDTGTMLGLCASVQPLLRTLGPTVGGLLYRSFGVPVFGHVQVAINTLVLLVLWRKPMPQRKDKVR.

10 consecutive transmembrane segments (helical) span residues Ile26–Ile46, Ile59–Phe79, Ala90–Ser110, Leu156–Ser176, Ala184–Ala204, Ile243–Ile263, Ala276–Gly296, Val312–Cys332, Leu334–Ile354, and Phe391–Leu411.

This sequence belongs to the major facilitator (TC 2.A.1) superfamily. Organic cation transporter (TC 2.A.1.19) family. As to quaternary structure, interacts with RNF167. As to expression, expressed at high levels in adult and fetal kidney and liver, and adult colon. Expressed in fetal renal proximal tubules (at protein level). Expressed at lower levels in heart, brain and lung.

Its subcellular location is the apical cell membrane. May act as a transporter of organic cations based on a proton efflux antiport mechanism. May play a role in the transport of chloroquine and quinidine-related compounds in kidney. Plays a role in the regulation of lipid metabolism. In Homo sapiens (Human), this protein is Solute carrier family 67 member A1.